A 565-amino-acid chain; its full sequence is Tetratricopeptide repeat protein 39A (565 aa).

3 TPR repeats span residues 271–304 (AIFLFFAGRAEEIKGNIDEAVALFEDGCKAQQVW), 461–494 (CLIQLLKGLCLKNQGQMQAAEDCFNQVYISEKKL), and 502–535 (PNALLEMSLLFIDTGRKEQAIKLLQKAKNNYKVY).

This sequence belongs to the TTC39 family.

The chain is Tetratricopeptide repeat protein 39A (ttc39a) from Danio rerio (Zebrafish).